We begin with the raw amino-acid sequence, 115 residues long: Large ribosomal subunit protein bL19 (115 aa).

It belongs to the bacterial ribosomal protein bL19 family.

Functionally, this protein is located at the 30S-50S ribosomal subunit interface and may play a role in the structure and function of the aminoacyl-tRNA binding site. In Lactobacillus acidophilus (strain ATCC 700396 / NCK56 / N2 / NCFM), this protein is Large ribosomal subunit protein bL19.